The chain runs to 468 residues: ATP synthase subunit beta (468 aa).

148–155 (GGAGVGKT) is a binding site for ATP.

This sequence belongs to the ATPase alpha/beta chains family. As to quaternary structure, F-type ATPases have 2 components, CF(1) - the catalytic core - and CF(0) - the membrane proton channel. CF(1) has five subunits: alpha(3), beta(3), gamma(1), delta(1), epsilon(1). CF(0) has three main subunits: a(1), b(2) and c(9-12). The alpha and beta chains form an alternating ring which encloses part of the gamma chain. CF(1) is attached to CF(0) by a central stalk formed by the gamma and epsilon chains, while a peripheral stalk is formed by the delta and b chains.

The protein localises to the cell inner membrane. It carries out the reaction ATP + H2O + 4 H(+)(in) = ADP + phosphate + 5 H(+)(out). Produces ATP from ADP in the presence of a proton gradient across the membrane. The catalytic sites are hosted primarily by the beta subunits. This chain is ATP synthase subunit beta, found in Stenotrophomonas maltophilia (strain R551-3).